Here is a 290-residue protein sequence, read N- to C-terminus: MLEPQENGLTDLPDYEHIEDETFPPFPPPASPGREDGEGAEPEEESGRGAPVPVPPKRTVKRNIPKLNAERLISERGLPALRHVFEKAKFKGKGHEAEDLKTLIRHMEHWAHRLFPKLQFEDFIDRVECLGNKKEVQTCLKRIRLDLPILHEDFVSNNDEVEENNGHDVTATELDHFLTNSYGSVEFASESSRSLTEEEQQRIERNKQLALERRQAKLLSNSQSLGNDLSVNTPSTQTSEAGSTGEEQKEEESNGFNKDLLDSPHNAGAASTVNEEEQLKVEETQLDQSF.

Residues 1–59 (MLEPQENGLTDLPDYEHIEDETFPPFPPPASPGREDGEGAEPEEESGRGAPVPVPPKRT) are disordered. The interaction with TIMELESS stretch occupies residues 67–143 (LNAERLISER…KEVQTCLKRI (77 aa)). Phosphoserine is present on residues S194 and S222. Residues 221–242 (NSQSLGNDLSVNTPSTQTSEAG) show a composition bias toward polar residues. A disordered region spans residues 221 to 290 (NSQSLGNDLS…VEETQLDQSF (70 aa)). Residues T233 and T244 each carry the phosphothreonine modification.

It belongs to the CSM3 family. As to quaternary structure, interacts with TIMELESS (via N-terminus), which impairs TIMELESS self-association. Associates with the MCM2-7 complex. Interacts with RPA2, PRDX2.

It localises to the cytoplasm. It is found in the nucleus. Its function is as follows. Plays an important role in the control of DNA replication and the maintenance of replication fork stability. Important for cell survival after DNA damage or replication stress. May be specifically required for the ATR-CHEK1 pathway in the replication checkpoint induced by hydroxyurea or ultraviolet light. Forms a complex with TIMELESS and this complex regulates DNA replication processes under both normal and stress conditions, stabilizes replication forks and influences both CHEK1 phosphorylation and the intra-S phase checkpoint in response to genotoxic stress. The chain is TIMELESS-interacting protein (TIPIN) from Bos taurus (Bovine).